A 532-amino-acid chain; its full sequence is MRLAFWLYEGTALHGLSRVTNSMKNVHTVYHAPQGDDYITATYTMLERTPEFPALSISVVRGQDLARGVSRLPGTLQQVEEHYHPEVIVVAPSCSTALLQEDLSQLSMHSGVDTGKILVHDVNPFRVQEHESAEGLFTGLVKRYALEQSTTEKPSVNLLGFTSLGFHLRSDLISLRRILKTLGVEVNVVAPWGAGIEDLRNLPAGWVNVVPYHEMGPGAAHHLREKFGMPSLQGIPMGVNPTLDWIRDLLELLNVIAAEKGLPSIEMPPLTDFSLDGLSAPSGVPWFARTADMESFSGKRAFVFGDATHTVGMVKFLKDELGMQIIGAGTYLEQHADWIRDQLEGYLPVPLMVTDKFQEVAKKIEDEMPELVCGTQMERHSCRKLDVPCMVISTPTHIENHLIGYYPILGFDGADILADRVYTSCKLGLEKHLIDFFGDAGLEYEEEEPESISNGHAAAAGSEGGVPDSGEAGDAGDTDGMPWSPDAEKMLRKVPFFVRKKVRKNTENFARENGEATITAEVFKRAKEALGG.

[4Fe-4S] cluster is bound at residue D36. The active-site Proton donor is the D292. 428–429 (GL) serves as a coordination point for substrate. Residues 445–486 (EEEEPESISNGHAAAAGSEGGVPDSGEAGDAGDTDGMPWSPD) form a disordered region.

This sequence belongs to the ChlB/BchB/BchZ family. As to quaternary structure, protochlorophyllide reductase is composed of three subunits; BchL, BchN and BchB. Forms a heterotetramer of two BchB and two BchN subunits. [4Fe-4S] cluster serves as cofactor.

It catalyses the reaction chlorophyllide a + oxidized 2[4Fe-4S]-[ferredoxin] + 2 ADP + 2 phosphate = protochlorophyllide a + reduced 2[4Fe-4S]-[ferredoxin] + 2 ATP + 2 H2O. The protein operates within porphyrin-containing compound metabolism; bacteriochlorophyll biosynthesis (light-independent). In terms of biological role, component of the dark-operative protochlorophyllide reductase (DPOR) that uses Mg-ATP and reduced ferredoxin to reduce ring D of protochlorophyllide (Pchlide) to form chlorophyllide a (Chlide). This reaction is light-independent. The NB-protein (BchN-BchB) is the catalytic component of the complex. In Chlorobium phaeobacteroides (strain BS1), this protein is Light-independent protochlorophyllide reductase subunit B.